The sequence spans 335 residues: MEGIDFNQIGVSFKGSGSYVPDQILTNQKISQKVDTSNEWIKSRTGISERRISSLGDNVNEMGYKAALTAIEMANWDIKTVDLIVLATSTPHDLFGSAPSIQAKLGAANAVAFDLTAACSGFLFALITTSQFLKGGSFKRAIVIGADQLSSFVDWNDRRSCILFGDGAGALAIEATNQFDNLIGFDMRTDGERGSFLNLPSKNNKDLIIDNIDFLSGAFSPIQMNGQEVYKFAVREVPIILEKLFNKTHYTSDEVDWLVLHQANQRILDSVGDRLKIPREKILSNLEKYGNTSAATIPLVIDEAIRSNRIKQNDIIATSGFGAGLSWGAALIKWG.

Residues C119 and H261 contribute to the active site. An ACP-binding region spans residues 262 to 266 (QANQR). Residue N291 is part of the active site.

The protein belongs to the thiolase-like superfamily. FabH family. Homodimer.

Its subcellular location is the cytoplasm. The enzyme catalyses malonyl-[ACP] + acetyl-CoA + H(+) = 3-oxobutanoyl-[ACP] + CO2 + CoA. The protein operates within lipid metabolism; fatty acid biosynthesis. Catalyzes the condensation reaction of fatty acid synthesis by the addition to an acyl acceptor of two carbons from malonyl-ACP. Catalyzes the first condensation reaction which initiates fatty acid synthesis and may therefore play a role in governing the total rate of fatty acid production. Possesses both acetoacetyl-ACP synthase and acetyl transacylase activities. Its substrate specificity determines the biosynthesis of branched-chain and/or straight-chain of fatty acids. This chain is Beta-ketoacyl-[acyl-carrier-protein] synthase III, found in Prochlorococcus marinus (strain MIT 9301).